A 218-amino-acid polypeptide reads, in one-letter code: Large ribosomal subunit protein uL3 (218 aa).

The protein belongs to the universal ribosomal protein uL3 family. In terms of assembly, part of the 50S ribosomal subunit. Forms a cluster with proteins L14 and L19.

Functionally, one of the primary rRNA binding proteins, it binds directly near the 3'-end of the 23S rRNA, where it nucleates assembly of the 50S subunit. This is Large ribosomal subunit protein uL3 from Corynebacterium efficiens (strain DSM 44549 / YS-314 / AJ 12310 / JCM 11189 / NBRC 100395).